Consider the following 242-residue polypeptide: Pyridoxine 5'-phosphate synthase (242 aa).

Position 6 (Asn6) interacts with 3-amino-2-oxopropyl phosphate. Asp8–His9 provides a ligand contact to 1-deoxy-D-xylulose 5-phosphate. Residue Arg17 participates in 3-amino-2-oxopropyl phosphate binding. Residue His42 is the Proton acceptor of the active site. 1-deoxy-D-xylulose 5-phosphate-binding residues include Arg44 and His49. The active-site Proton acceptor is Glu69. Thr99 contributes to the 1-deoxy-D-xylulose 5-phosphate binding site. His190 functions as the Proton donor in the catalytic mechanism. Residues Gly191 and Gly212–His213 each bind 3-amino-2-oxopropyl phosphate.

It belongs to the PNP synthase family. As to quaternary structure, homooctamer; tetramer of dimers.

Its subcellular location is the cytoplasm. It carries out the reaction 3-amino-2-oxopropyl phosphate + 1-deoxy-D-xylulose 5-phosphate = pyridoxine 5'-phosphate + phosphate + 2 H2O + H(+). Its pathway is cofactor biosynthesis; pyridoxine 5'-phosphate biosynthesis; pyridoxine 5'-phosphate from D-erythrose 4-phosphate: step 5/5. Catalyzes the complicated ring closure reaction between the two acyclic compounds 1-deoxy-D-xylulose-5-phosphate (DXP) and 3-amino-2-oxopropyl phosphate (1-amino-acetone-3-phosphate or AAP) to form pyridoxine 5'-phosphate (PNP) and inorganic phosphate. The sequence is that of Pyridoxine 5'-phosphate synthase from Neisseria meningitidis serogroup A / serotype 4A (strain DSM 15465 / Z2491).